We begin with the raw amino-acid sequence, 593 residues long: Proteasome-associated ATPase (593 aa).

A coiled-coil region spans residues 5 to 94 (DDADSRAARW…KEEIDRLAQP (90 aa)). Residue 281–286 (GCGKTL) coordinates ATP. The segment at 574-593 (GKGADAGRSIETASNTGQYL) is disordered. Over residues 584 to 593 (ETASNTGQYL) the composition is skewed to polar residues. A docks into pockets in the proteasome alpha-ring region spans residues 592 to 593 (YL).

Belongs to the AAA ATPase family. In terms of assembly, homohexamer. Assembles into a hexameric ring structure that caps the 20S proteasome core. Strongly interacts with the prokaryotic ubiquitin-like protein Pup through a hydrophobic interface; the interacting region of ARC lies in its N-terminal coiled-coil domain. There is one Pup binding site per ARC hexamer ring. Upon ATP-binding, the C-terminus of ARC interacts with the alpha-rings of the proteasome core, possibly by binding to the intersubunit pockets.

The protein operates within protein degradation; proteasomal Pup-dependent pathway. Its function is as follows. ATPase which is responsible for recognizing, binding, unfolding and translocation of pupylated proteins into the bacterial 20S proteasome core particle. May be essential for opening the gate of the 20S proteasome via an interaction with its C-terminus, thereby allowing substrate entry and access to the site of proteolysis. Thus, the C-termini of the proteasomal ATPase may function like a 'key in a lock' to induce gate opening and therefore regulate proteolysis. The chain is Proteasome-associated ATPase from Salinispora tropica (strain ATCC BAA-916 / DSM 44818 / JCM 13857 / NBRC 105044 / CNB-440).